Here is a 315-residue protein sequence, read N- to C-terminus: Probable cell division protein WhiA (315 aa).

The segment at residues 275 to 309 (NLKELGEMVPSGVVSKSGINHRLRKINEIADKIRE) is a DNA-binding region (H-T-H motif).

It belongs to the WhiA family.

Functionally, involved in cell division and chromosome segregation. This chain is Probable cell division protein WhiA, found in Brevibacillus brevis (strain 47 / JCM 6285 / NBRC 100599).